We begin with the raw amino-acid sequence, 78 residues long: Chondrosarcoma-associated gene 1 protein (78 aa).

A signal peptide spans 1–19 (MSATTACWPAFTVLGEARG). The disordered stretch occupies residues 35–78 (KMSRKPRASSPFSNNHPSTPKRFPRQPRREKGPVKEVPGTKGSP).

In terms of tissue distribution, expressed in chondrosarcoma, melanoma, cartilage and testis, but not in other normal tissues.

It is found in the cytoplasm. It localises to the cytoskeleton. The protein resides in the microtubule organizing center. The protein localises to the centrosome. Its subcellular location is the spindle pole. Functionally, may play an important role in maintaining centrosome integrity during mitosis. The protein is Chondrosarcoma-associated gene 1 protein of Homo sapiens (Human).